Here is a 316-residue protein sequence, read N- to C-terminus: Acetaldehyde dehydrogenase (316 aa).

Serine 13–isoleucine 16 contributes to the NAD(+) binding site. The active-site Acyl-thioester intermediate is the cysteine 131. Residues serine 162–asparagine 170 and asparagine 290 each bind NAD(+).

This sequence belongs to the acetaldehyde dehydrogenase family.

It catalyses the reaction acetaldehyde + NAD(+) + CoA = acetyl-CoA + NADH + H(+). Functionally, catalyzes the conversion of acetaldehyde to acetyl-CoA, using NAD(+) and coenzyme A. Is the final enzyme in the meta-cleavage pathway for the degradation of 2-aminophenol. The polypeptide is Acetaldehyde dehydrogenase (amnH) (Pseudomonas sp).